The chain runs to 461 residues: Anthranilate synthase component 1 (461 aa).

Residues S43 and 238–240 (PYM) contribute to the L-tryptophan site. 273–274 (GT) provides a ligand contact to chorismate. E300 is a Mg(2+) binding site. Chorismate-binding positions include Y388, R408, 422-424 (GAG), and G424. Position 437 (E437) interacts with Mg(2+).

Belongs to the anthranilate synthase component I family. Heterotetramer consisting of two non-identical subunits: a beta subunit (TrpG) and a large alpha subunit (TrpE). Mg(2+) serves as cofactor.

The catalysed reaction is chorismate + L-glutamine = anthranilate + pyruvate + L-glutamate + H(+). Its pathway is amino-acid biosynthesis; L-tryptophan biosynthesis; L-tryptophan from chorismate: step 1/5. Its activity is regulated as follows. Feedback inhibited by tryptophan. Its function is as follows. Part of a heterotetrameric complex that catalyzes the two-step biosynthesis of anthranilate, an intermediate in the biosynthesis of L-tryptophan. In the first step, the glutamine-binding beta subunit (TrpG) of anthranilate synthase (AS) provides the glutamine amidotransferase activity which generates ammonia as a substrate that, along with chorismate, is used in the second step, catalyzed by the large alpha subunit of AS (TrpE) to produce anthranilate. In the absence of TrpG, TrpE can synthesize anthranilate directly from chorismate and high concentrations of ammonia. This chain is Anthranilate synthase component 1 (trpE), found in Methanothermobacter marburgensis (strain ATCC BAA-927 / DSM 2133 / JCM 14651 / NBRC 100331 / OCM 82 / Marburg) (Methanobacterium thermoautotrophicum).